Reading from the N-terminus, the 173-residue chain is Ribosome maturation factor RimM (173 aa).

A PRC barrel domain is found at 92 to 165 (EGEFYHADLI…RVVIEAPAEI (74 aa)).

This sequence belongs to the RimM family. Binds ribosomal protein uS19.

It is found in the cytoplasm. Its function is as follows. An accessory protein needed during the final step in the assembly of 30S ribosomal subunit, possibly for assembly of the head region. Essential for efficient processing of 16S rRNA. May be needed both before and after RbfA during the maturation of 16S rRNA. It has affinity for free ribosomal 30S subunits but not for 70S ribosomes. The polypeptide is Ribosome maturation factor RimM (Nitrobacter winogradskyi (strain ATCC 25391 / DSM 10237 / CIP 104748 / NCIMB 11846 / Nb-255)).